A 473-amino-acid chain; its full sequence is Bifunctional protein GlmU (473 aa).

The pyrophosphorylase stretch occupies residues 1–240 (MAIHPLDVVI…AAQVAGVNSP (240 aa)). UDP-N-acetyl-alpha-D-glucosamine contacts are provided by residues K25, Q83, 88–89 (GT), 110–112 (SGD), G147, E165, and N238. D112 contributes to the Mg(2+) binding site. N238 serves as a coordination point for Mg(2+). The tract at residues 241–261 (VQLAELERVYQQRLATTLMEQ) is linker. An N-acetyltransferase region spans residues 262–473 (GVRLADPARL…WARPVKKPGV (212 aa)). 2 residues coordinate UDP-N-acetyl-alpha-D-glucosamine: R348 and K366. Residue H378 is the Proton acceptor of the active site. 2 residues coordinate UDP-N-acetyl-alpha-D-glucosamine: Y381 and N392. Acetyl-CoA-binding positions include A395, 401–402 (NY), S420, G438, and R455.

It in the N-terminal section; belongs to the N-acetylglucosamine-1-phosphate uridyltransferase family. The protein in the C-terminal section; belongs to the transferase hexapeptide repeat family. Homotrimer. Requires Mg(2+) as cofactor.

It is found in the cytoplasm. It catalyses the reaction alpha-D-glucosamine 1-phosphate + acetyl-CoA = N-acetyl-alpha-D-glucosamine 1-phosphate + CoA + H(+). The enzyme catalyses N-acetyl-alpha-D-glucosamine 1-phosphate + UTP + H(+) = UDP-N-acetyl-alpha-D-glucosamine + diphosphate. It functions in the pathway nucleotide-sugar biosynthesis; UDP-N-acetyl-alpha-D-glucosamine biosynthesis; N-acetyl-alpha-D-glucosamine 1-phosphate from alpha-D-glucosamine 6-phosphate (route II): step 2/2. The protein operates within nucleotide-sugar biosynthesis; UDP-N-acetyl-alpha-D-glucosamine biosynthesis; UDP-N-acetyl-alpha-D-glucosamine from N-acetyl-alpha-D-glucosamine 1-phosphate: step 1/1. Its pathway is bacterial outer membrane biogenesis; LPS lipid A biosynthesis. Catalyzes the last two sequential reactions in the de novo biosynthetic pathway for UDP-N-acetylglucosamine (UDP-GlcNAc). The C-terminal domain catalyzes the transfer of acetyl group from acetyl coenzyme A to glucosamine-1-phosphate (GlcN-1-P) to produce N-acetylglucosamine-1-phosphate (GlcNAc-1-P), which is converted into UDP-GlcNAc by the transfer of uridine 5-monophosphate (from uridine 5-triphosphate), a reaction catalyzed by the N-terminal domain. The protein is Bifunctional protein GlmU of Polaromonas naphthalenivorans (strain CJ2).